Consider the following 105-residue polypeptide: Urease subunit beta (105 aa).

It belongs to the urease beta subunit family. In terms of assembly, heterotrimer of UreA (gamma), UreB (beta) and UreC (alpha) subunits. Three heterotrimers associate to form the active enzyme.

Its subcellular location is the cytoplasm. The catalysed reaction is urea + 2 H2O + H(+) = hydrogencarbonate + 2 NH4(+). The protein operates within nitrogen metabolism; urea degradation; CO(2) and NH(3) from urea (urease route): step 1/1. This Mycobacterium sp. (strain JLS) protein is Urease subunit beta.